The sequence spans 217 residues: Large ribosomal subunit protein uL3 (217 aa).

This sequence belongs to the universal ribosomal protein uL3 family. In terms of assembly, part of the 50S ribosomal subunit. Forms a cluster with proteins L14 and L19.

Its function is as follows. One of the primary rRNA binding proteins, it binds directly near the 3'-end of the 23S rRNA, where it nucleates assembly of the 50S subunit. The protein is Large ribosomal subunit protein uL3 of Mycobacterium leprae (strain TN).